The sequence spans 32 residues: Photosystem II reaction center protein Z (32 aa).

Residues 12–32 (FGAAAWIGLVLLVGTLYYFVV) traverse the membrane as a helical segment.

Belongs to the PsbZ family. In terms of assembly, PSII is composed of 1 copy each of membrane proteins PsbA, PsbB, PsbC, PsbD, PsbE, PsbF, PsbH, PsbI, PsbJ, PsbK, PsbL, PsbM, PsbT, PsbY, PsbZ, Psb30/Ycf12, at least 3 peripheral proteins of the oxygen-evolving complex and a large number of cofactors. It forms dimeric complexes.

It localises to the plastid. Its subcellular location is the chloroplast thylakoid membrane. May control the interaction of photosystem II (PSII) cores with the light-harvesting antenna, regulates electron flow through the 2 photosystem reaction centers. PSII is a light-driven water plastoquinone oxidoreductase, using light energy to abstract electrons from H(2)O, generating a proton gradient subsequently used for ATP formation. This is Photosystem II reaction center protein Z from Euglena granulata.